The following is a 346-amino-acid chain: 4-hydroxy-3-methylbut-2-enyl diphosphate reductase (346 aa).

Cys19 lines the [4Fe-4S] cluster pocket. The (2E)-4-hydroxy-3-methylbut-2-enyl diphosphate site is built by His48 and His84. Positions 48 and 84 each coordinate dimethylallyl diphosphate. Isopentenyl diphosphate-binding residues include His48 and His84. Residue Cys106 participates in [4Fe-4S] cluster binding. His134 is a binding site for (2E)-4-hydroxy-3-methylbut-2-enyl diphosphate. His134 serves as a coordination point for dimethylallyl diphosphate. An isopentenyl diphosphate-binding site is contributed by His134. The active-site Proton donor is the Glu136. Thr175 lines the (2E)-4-hydroxy-3-methylbut-2-enyl diphosphate pocket. Cys205 provides a ligand contact to [4Fe-4S] cluster. Positions 233, 234, 235, and 278 each coordinate (2E)-4-hydroxy-3-methylbut-2-enyl diphosphate. Residues Ser233, Ser234, Asn235, and Ser278 each coordinate dimethylallyl diphosphate. The isopentenyl diphosphate site is built by Ser233, Ser234, Asn235, and Ser278.

It belongs to the IspH family. The cofactor is [4Fe-4S] cluster.

The enzyme catalyses isopentenyl diphosphate + 2 oxidized [2Fe-2S]-[ferredoxin] + H2O = (2E)-4-hydroxy-3-methylbut-2-enyl diphosphate + 2 reduced [2Fe-2S]-[ferredoxin] + 2 H(+). It catalyses the reaction dimethylallyl diphosphate + 2 oxidized [2Fe-2S]-[ferredoxin] + H2O = (2E)-4-hydroxy-3-methylbut-2-enyl diphosphate + 2 reduced [2Fe-2S]-[ferredoxin] + 2 H(+). It functions in the pathway isoprenoid biosynthesis; dimethylallyl diphosphate biosynthesis; dimethylallyl diphosphate from (2E)-4-hydroxy-3-methylbutenyl diphosphate: step 1/1. It participates in isoprenoid biosynthesis; isopentenyl diphosphate biosynthesis via DXP pathway; isopentenyl diphosphate from 1-deoxy-D-xylulose 5-phosphate: step 6/6. In terms of biological role, catalyzes the conversion of 1-hydroxy-2-methyl-2-(E)-butenyl 4-diphosphate (HMBPP) into a mixture of isopentenyl diphosphate (IPP) and dimethylallyl diphosphate (DMAPP). Acts in the terminal step of the DOXP/MEP pathway for isoprenoid precursor biosynthesis. In Brucella abortus (strain S19), this protein is 4-hydroxy-3-methylbut-2-enyl diphosphate reductase.